We begin with the raw amino-acid sequence, 916 residues long: RNA-directed DNA polymerase from mobile element jockey (916 aa).

Residues 483 to 757 (SILRVGYFPK…HEYKYLGVIL (275 aa)) enclose the Reverse transcriptase domain. Residues 890–916 (RSASPRSRVRRRLKRHHPQDLLDRALT) are disordered. Residues 896 to 906 (SRVRRRLKRHH) show a composition bias toward basic residues. Basic and acidic residues predominate over residues 907–916 (PQDLLDRALT).

Mg(2+) is required as a cofactor. The cofactor is Mn(2+).

The catalysed reaction is DNA(n) + a 2'-deoxyribonucleoside 5'-triphosphate = DNA(n+1) + diphosphate. Inactivated by sulphydryl reagent. The chain is RNA-directed DNA polymerase from mobile element jockey (jockey\pol) from Drosophila funebris (Fruit fly).